A 692-amino-acid chain; its full sequence is Protein arginine N-methyltransferase 7 (692 aa).

SAM-dependent MTase PRMT-type domains lie at 14-359 (ENSW…YSLW) and 368-692 (AKTV…QEKR).

Belongs to the class I-like SAM-binding methyltransferase superfamily. Protein arginine N-methyltransferase family. PRMT7 subfamily.

Essential arginine methyltransferase that can both catalyze the formation of omega-N monomethylarginine (MMA) and symmetrical dimethylarginine (sDMA). Specifically mediates the symmetrical dimethylation of arginine residues in the small nuclear ribonucleoproteins SmD1 and SmD3. The polypeptide is Protein arginine N-methyltransferase 7 (Art7) (Drosophila persimilis (Fruit fly)).